The following is a 75-amino-acid chain: Exodeoxyribonuclease 7 small subunit (75 aa).

This sequence belongs to the XseB family. As to quaternary structure, heterooligomer composed of large and small subunits.

It is found in the cytoplasm. It carries out the reaction Exonucleolytic cleavage in either 5'- to 3'- or 3'- to 5'-direction to yield nucleoside 5'-phosphates.. In terms of biological role, bidirectionally degrades single-stranded DNA into large acid-insoluble oligonucleotides, which are then degraded further into small acid-soluble oligonucleotides. The sequence is that of Exodeoxyribonuclease 7 small subunit from Thermotoga maritima (strain ATCC 43589 / DSM 3109 / JCM 10099 / NBRC 100826 / MSB8).